A 1006-amino-acid polypeptide reads, in one-letter code: 5'-3' exoribonuclease 2 (1006 aa).

Coiled coils occupy residues 256 to 287 (FAQDNRKRNNLKDTINMTEEEKQFLQKQNSEQ) and 453 to 544 (RLKK…AESE). Residues 492–529 (DDAVSKANKTNFNLAEVMKQKIINKKHRLEKDNEEEEI) form a required for retention in the nucleus region. The span at 561 to 575 (DRENSETTEVSRDSP) shows a compositional bias: basic and acidic residues. 2 disordered regions span residues 561–584 (DRENSETTEVSRDSPVHSTVNVSE) and 939–1006 (HNYG…ANRR). A Phosphoserine modification is found at Ser574. Over residues 939–956 (HNYGRNSYNSQPGFNNSR) the composition is skewed to polar residues. A run of 6 repeats spans residues 955–958 (SRYD), 961–964 (NNNY), 972–974 (NNN), 975–978 (YSGN), 984–986 (YSG), and 996–999 (SRYD). The 2 X 4 AA repeats of S-R-Y-D, N-N-N-Y, Y-S-G-N stretch occupies residues 955–999 (SRYDGGNNNYRQNSNYRNNNYSGNRNSGQYSGNSYSRNNKQSRYD). Over residues 959-993 (GGNNNYRQNSNYRNNNYSGNRNSGQYSGNSYSRNN) the composition is skewed to low complexity. The span at 996–1006 (SRYDNSRANRR) shows a compositional bias: basic and acidic residues.

Belongs to the 5'-3' exonuclease family. XRN2/RAT1 subfamily. As to quaternary structure, interacts with RAI1 and RTT103. The cofactor is Mg(2+). Requires Mn(2+) as cofactor.

The protein resides in the nucleus. Its activity is regulated as follows. Inhibited by nucleoside 3', 5'-bisphosphates. In terms of biological role, possesses 5'-&gt;3' exoribonuclease activity. Required for the processing of nuclear mRNA, rRNA and small nucleolar RNA (snoRNA) precursors. May promote termination of transcription by RNA polymerase II via the recruitment of 3'-end processing factors to the poly(A) site and by the degradation of nascent RNA downstream of the poly(A) site. The sequence is that of 5'-3' exoribonuclease 2 (RAT1) from Saccharomyces cerevisiae (strain ATCC 204508 / S288c) (Baker's yeast).